A 416-amino-acid chain; its full sequence is Beta sliding clamp (416 aa).

This sequence belongs to the beta sliding clamp family. Forms a ring-shaped head-to-tail homodimer around DNA which binds and tethers DNA polymerases and other proteins to the DNA. The DNA replisome complex has a single clamp-loading complex (3 tau and 1 each of delta, delta', psi and chi subunits) which binds 3 Pol III cores (1 core on the leading strand and 2 on the lagging strand) each with a beta sliding clamp dimer. Additional proteins in the replisome are other copies of gamma, psi and chi, Ssb, DNA helicase and RNA primase.

It is found in the cytoplasm. In terms of biological role, confers DNA tethering and processivity to DNA polymerases and other proteins. Acts as a clamp, forming a ring around DNA (a reaction catalyzed by the clamp-loading complex) which diffuses in an ATP-independent manner freely and bidirectionally along dsDNA. Initially characterized for its ability to contact the catalytic subunit of DNA polymerase III (Pol III), a complex, multichain enzyme responsible for most of the replicative synthesis in bacteria; Pol III exhibits 3'-5' exonuclease proofreading activity. The beta chain is required for initiation of replication as well as for processivity of DNA replication. The polypeptide is Beta sliding clamp (dnaN) (Chlamydia trachomatis serovar D (strain ATCC VR-885 / DSM 19411 / UW-3/Cx)).